The primary structure comprises 73 residues: Kappa-scoloptoxin SsmTx-I (73 aa).

Residues 1–25 (MMMMFSVVSVFLMLLLLKFHDLSMG) form the signal peptide. A propeptide spanning residues 26-37 (EEISLLKKVVRR) is cleaved from the precursor. 2 disulfides stabilise this stretch: Cys-45-Cys-56 and Cys-50-Cys-63.

Belongs to the scoloptoxin-04 family. As to expression, expressed by the venom gland.

It is found in the secreted. Exhibits highly specific blockage of Kv2.1/KCNB1 (IC(50)=41.7 nM) voltage-gated potassium channels. This blockage is not associated with a significant change in steady-state activation, suggesting that this toxin acts as a channel blocker rather than a gating-modifier. Shows potential analgesic activities in formalin-induced paw licking, thermal pain, and acetic acid-induced abdominal writhing mice models. This Scolopendra mutilans (Chinese red-headed centipede) protein is Kappa-scoloptoxin SsmTx-I.